Consider the following 248-residue polypeptide: Isoprenyl transferase (248 aa).

The active site involves aspartate 23. Residue aspartate 23 participates in Mg(2+) binding. Substrate contacts are provided by residues 24 to 27 (GNGR), tryptophan 28, arginine 36, histidine 40, and 68 to 70 (STE). Asparagine 71 acts as the Proton acceptor in catalysis. Substrate-binding positions include tryptophan 72, arginine 74, arginine 185, and 191 to 193 (RIS). Glutamate 204 contributes to the Mg(2+) binding site.

It belongs to the UPP synthase family. Homodimer. Mg(2+) is required as a cofactor.

Catalyzes the condensation of isopentenyl diphosphate (IPP) with allylic pyrophosphates generating different type of terpenoids. The sequence is that of Isoprenyl transferase from Neisseria gonorrhoeae (strain ATCC 700825 / FA 1090).